Here is a 472-residue protein sequence, read N- to C-terminus: Lycopene beta cyclase, chloroplastic (472 aa).

Residues 1–25 constitute a chloroplast transit peptide; that stretch reads MDALLTSPFIPLKKPSHNRKSNTTT. The disordered stretch occupies residues 1 to 27; that stretch reads MDALLTSPFIPLKKPSHNRKSNTTTAS. 62 to 90 contacts NAD(+); that stretch reads LAVVGGGPAGLAVAKRVSDAGLSVCSIDP.

It belongs to the lycopene cyclase family. As to expression, expressed in flower buds and lips. Detected in roots and leaves.

The protein resides in the plastid. Its subcellular location is the chloroplast. The catalysed reaction is a carotenoid psi-end group = a carotenoid beta-end derivative. It functions in the pathway carotenoid biosynthesis; beta-carotene biosynthesis. Its pathway is carotenoid biosynthesis; beta-zeacarotene biosynthesis. Catalyzes the double cyclization reaction which converts lycopene to beta-carotene and neurosporene to beta-zeacarotene. The polypeptide is Lycopene beta cyclase, chloroplastic (LCY-B) (Oncidium hybrid cultivar (Orchid)).